Here is a 358-residue protein sequence, read N- to C-terminus: MDNVEDLRGTLLSAVAEAGDLDALDAIRVSALGKKGQITGLMKTLGAMDPEARKAAGQALNLVKDEIAAALDARKADLAAAALEAKLARERLDVSLAPAPEATGAIHPISQTWEEVVAIFAQMGFEVAEGPEIEDDFHNFTALNFPPGHPARAMHDTFFLPTREDGSRHLLRTHTSPVQIRTMMGRKPPIRILAPGRTYRCDSDMTHTPMFHQFEGLVIDKATHFGHLKGCLHEFVRAYFEVDDLPMRFRPSFFPFTEPSAEVDIGCSRKGGALKIGAGDSWLEILGCGMVHPNVLTACGLDPEEYQGFAFGMGLERIAMLKYGIPDLRTFFESDLRWLRHYGFAALDLPTLHGGLSR.

Residue Glu-258 coordinates Mg(2+).

It belongs to the class-II aminoacyl-tRNA synthetase family. Phe-tRNA synthetase alpha subunit type 1 subfamily. In terms of assembly, tetramer of two alpha and two beta subunits. Requires Mg(2+) as cofactor.

Its subcellular location is the cytoplasm. It carries out the reaction tRNA(Phe) + L-phenylalanine + ATP = L-phenylalanyl-tRNA(Phe) + AMP + diphosphate + H(+). The protein is Phenylalanine--tRNA ligase alpha subunit of Rhodospirillum rubrum (strain ATCC 11170 / ATH 1.1.1 / DSM 467 / LMG 4362 / NCIMB 8255 / S1).